A 199-amino-acid chain; its full sequence is ATP-dependent Clp protease proteolytic subunit 2 (199 aa).

Ser-98 serves as the catalytic Nucleophile. His-123 is an active-site residue.

The protein belongs to the peptidase S14 family. As to quaternary structure, fourteen ClpP subunits assemble into 2 heptameric rings which stack back to back to give a disk-like structure with a central cavity, resembling the structure of eukaryotic proteasomes.

It is found in the cytoplasm. It catalyses the reaction Hydrolysis of proteins to small peptides in the presence of ATP and magnesium. alpha-casein is the usual test substrate. In the absence of ATP, only oligopeptides shorter than five residues are hydrolyzed (such as succinyl-Leu-Tyr-|-NHMec, and Leu-Tyr-Leu-|-Tyr-Trp, in which cleavage of the -Tyr-|-Leu- and -Tyr-|-Trp bonds also occurs).. Functionally, cleaves peptides in various proteins in a process that requires ATP hydrolysis. Has a chymotrypsin-like activity. Plays a major role in the degradation of misfolded proteins. The sequence is that of ATP-dependent Clp protease proteolytic subunit 2 from Treponema pallidum (strain Nichols).